The following is a 944-amino-acid chain: Protein unc-45 homolog A (944 aa).

The disordered stretch occupies residues 1–25; sequence MTVSGPETPEPRPSDPGASSAEQLR. TPR repeat units lie at residues 21-54, 58-91, and 92-125; these read AEQL…GATP, AILH…DGGD, and VKAL…EPKN. Lys70 is modified (N6-acetyllysine). Position 483 is an N6-acetyllysine (Lys483).

In terms of assembly, interacts with PGR isoforms A and B as well as with NR3C1 in the absence of ligand, and with HSP90AB1. Binding to HSP90AB1 involves 2 UNC45A monomers per HSP90AB1 dimer. As to expression, detected in spleen, bone marrow, lung and ovary, and at lower levels in testis, kidney, heart and brain (at protein level). Ubiquitous. Detected in uterus, large intestine, kidney, spleen, lung, brain, liver and ovary.

The protein resides in the cytoplasm. The protein localises to the perinuclear region. It is found in the nucleus. May act as co-chaperone for HSP90 (Potential). Prevents the stimulation of HSP90AB1 ATPase activity by AHSA1. Positive factor in promoting PGR function in the cell. May be necessary for proper folding of myosin (Potential). Necessary for normal cell proliferation. Necessary for normal myotube formation and myosin accumulation during muscle cell development. May play a role in erythropoiesis in stroma cells in the spleen. This is Protein unc-45 homolog A (Unc45a) from Mus musculus (Mouse).